A 41-amino-acid polypeptide reads, in one-letter code: Perlinhibin (41 aa).

Post-translationally, contains four disulfide bonds.

Binds to calcite crystals in the shell and inhibits further shell growth at the binding site. The protein is Perlinhibin of Haliotis laevigata (Smooth Australian abalone).